Here is a 274-residue protein sequence, read N- to C-terminus: Protein-export membrane protein SecF (274 aa).

The next 6 helical transmembrane spans lie at 14–34 (LLIL…ALGV), 121–141 (SVKV…FAIF), 143–163 (KPLL…DALG), 175–197 (ASFA…LSMY), 217–237 (TGIT…LLSM), and 247–267 (VVIF…AWVI).

This sequence belongs to the SecD/SecF family. SecF subfamily. In terms of assembly, part of the protein translocation apparatus. Forms a complex with SecD.

The protein resides in the cell membrane. Involved in protein export. This is Protein-export membrane protein SecF from Methanopyrus kandleri (strain AV19 / DSM 6324 / JCM 9639 / NBRC 100938).